Reading from the N-terminus, the 669-residue chain is DNA ligase (669 aa).

Residues 32–36 (DAEYD), 81–82 (SL), and Glu113 each bind NAD(+). Lys115 functions as the N6-AMP-lysine intermediate in the catalytic mechanism. NAD(+) is bound by residues Arg136, Glu173, Lys290, and Lys314. Cys408, Cys411, Cys426, and Cys432 together coordinate Zn(2+). One can recognise a BRCT domain in the interval 592–669 (AVDSALAGKI…DEQALIEFLK (78 aa)).

This sequence belongs to the NAD-dependent DNA ligase family. LigA subfamily. The cofactor is Mg(2+). Requires Mn(2+) as cofactor.

It catalyses the reaction NAD(+) + (deoxyribonucleotide)n-3'-hydroxyl + 5'-phospho-(deoxyribonucleotide)m = (deoxyribonucleotide)n+m + AMP + beta-nicotinamide D-nucleotide.. Its function is as follows. DNA ligase that catalyzes the formation of phosphodiester linkages between 5'-phosphoryl and 3'-hydroxyl groups in double-stranded DNA using NAD as a coenzyme and as the energy source for the reaction. It is essential for DNA replication and repair of damaged DNA. The sequence is that of DNA ligase from Vibrio cholerae serotype O1 (strain ATCC 39541 / Classical Ogawa 395 / O395).